The primary structure comprises 562 residues: Oxygen-dependent choline dehydrogenase (562 aa).

4 to 33 (DYIIIGAGSAGNVLATRLTEDPNTTVLLLE) is an FAD binding site. The active-site Proton acceptor is His-473.

It belongs to the GMC oxidoreductase family. FAD serves as cofactor.

It carries out the reaction choline + A = betaine aldehyde + AH2. The catalysed reaction is betaine aldehyde + NAD(+) + H2O = glycine betaine + NADH + 2 H(+). The protein operates within amine and polyamine biosynthesis; betaine biosynthesis via choline pathway; betaine aldehyde from choline (cytochrome c reductase route): step 1/1. Involved in the biosynthesis of the osmoprotectant glycine betaine. Catalyzes the oxidation of choline to betaine aldehyde and betaine aldehyde to glycine betaine at the same rate. The polypeptide is Oxygen-dependent choline dehydrogenase (Escherichia coli O45:K1 (strain S88 / ExPEC)).